The following is a 276-amino-acid chain: MRGTVSVPKKAEDAKADPPAKKKADTQASSHTLLEGRLGYQLESALLVRALTHRSYAYENGGLPTNERLEFLGDSVLGLVVTDTLYRTHPDLPEGQLAKLRAAVVNSRALAEVGRGLELGSFIRLGRGEEGTGGRDKASILADTLEAVIGAVYLDQGLDAASELVHRLFDPLIEKSSNLGAGLDWKTSLQELTATEGLGVPEYLVTETGPDHEKTFTAAARVGGVSYGTGTGRSKKEAEQQAAESAWRSIRAAADERAKATADAVDADPDEASASA.

The interval 1–29 is disordered; it reads MRGTVSVPKKAEDAKADPPAKKKADTQAS. Basic and acidic residues predominate over residues 9 to 25; the sequence is KKAEDAKADPPAKKKAD. One can recognise an RNase III domain in the interval 31-157; sequence HTLLEGRLGY…VIGAVYLDQG (127 aa). Residue E70 coordinates Mg(2+). D74 is an active-site residue. Mg(2+) contacts are provided by D143 and E146. E146 is a catalytic residue. Residues 184-252 form the DRBM domain; the sequence is DWKTSLQELT…AESAWRSIRA (69 aa). A disordered region spans residues 227–276; that stretch reads YGTGTGRSKKEAEQQAAESAWRSIRAAADERAKATADAVDADPDEASASA. Residues 265–276 show a composition bias toward acidic residues; sequence VDADPDEASASA.

Belongs to the ribonuclease III family. In terms of assembly, homodimer. Requires Mg(2+) as cofactor.

Its subcellular location is the cytoplasm. The enzyme catalyses Endonucleolytic cleavage to 5'-phosphomonoester.. Its function is as follows. Digests double-stranded RNA. Involved in the processing of primary rRNA transcript to yield the immediate precursors to the large and small rRNAs (23S and 16S). Also processes some mRNAs, and tRNAs when they are encoded in the rRNA operon. May modulate key aspects of gene expression as its absence has extensive effects on the abundance of about 200 different transcripts. Probably processes pre-crRNA and tracrRNA of type II CRISPR loci if present in the organism. In Streptomyces coelicolor (strain ATCC BAA-471 / A3(2) / M145), this protein is Ribonuclease 3 (rnc).